A 180-amino-acid chain; its full sequence is Oligoribonuclease (180 aa).

Residues 7 to 170 (LIWIDLEMTG…DDIRESIAEL (164 aa)) enclose the Exonuclease domain. Y128 is a catalytic residue.

It belongs to the oligoribonuclease family.

The protein localises to the cytoplasm. Its function is as follows. 3'-to-5' exoribonuclease specific for small oligoribonucleotides. The sequence is that of Oligoribonuclease from Pseudomonas entomophila (strain L48).